Consider the following 198-residue polypeptide: HTH-type transcriptional regulator BetI (198 aa).

Residues 8-68 (PLRRRELIDA…ATMRHLLREL (61 aa)) form the HTH tetR-type domain. The segment at residues 31–50 (TVAQIAHEAGVSPALAHHYF) is a DNA-binding region (H-T-H motif).

The protein operates within amine and polyamine biosynthesis; betaine biosynthesis via choline pathway [regulation]. Functionally, repressor involved in the biosynthesis of the osmoprotectant glycine betaine. It represses transcription of the choline transporter BetT and the genes of BetAB involved in the synthesis of glycine betaine. The sequence is that of HTH-type transcriptional regulator BetI from Brucella suis (strain ATCC 23445 / NCTC 10510).